Reading from the N-terminus, the 372-residue chain is MNLSSLPFRLLAAAVALCAIAAPASAERIKDLAQVGGVRGNALVGYGLVVGLDGSGDRTSQAPFTVQSLKNLLGELGVNVPANVNPQLKNVAAVAIHAELPPFAKPGQPIDVTVSSIANAVSLRGGSLLMAPLKGADGQVYAMAQGNLVVGGFGAQGKDGSRVSVNVPSVGRIPNGATVERALPDVFAGTGEITLNLHQNDFTTVSRMVAAIDSSFGAGTARAVDGVTVAVRSPTDPGARIGLLSRLENVELSPGDAPAKVVVNARTGTVVIGQLVRVMPAAIAHGSLTVTISENTNVSQPGAFSGGRTAVTQQSTITATSEGSRMFKFEGGTTLDQIVRAVNEVGAAPGDLVAILEALKQAGALTAELEVI.

The signal sequence occupies residues 1-26 (MNLSSLPFRLLAAAVALCAIAAPASA).

The protein belongs to the FlgI family. The basal body constitutes a major portion of the flagellar organelle and consists of four rings (L,P,S, and M) mounted on a central rod.

It localises to the periplasm. The protein resides in the bacterial flagellum basal body. In terms of biological role, assembles around the rod to form the L-ring and probably protects the motor/basal body from shearing forces during rotation. The protein is Flagellar P-ring protein of Xanthomonas axonopodis pv. citri (strain 306).